A 396-amino-acid polypeptide reads, in one-letter code: tRNA (guanine(9)-N1)-methyltransferase (396 aa).

Composition is skewed to basic and acidic residues over residues 1 to 18 (MEDDDRPRKYPKLNHDEV) and 52 to 73 (DRIDNDVKQACDEEGQDAHGKD). Residues 1-109 (MEDDDRPRKY…KVKRKEKLVA (109 aa)) form a disordered region. Positions 139–357 (TQKKFQRSTL…QVIPQRKGGK (219 aa)) constitute an SAM-dependent MTase TRM10-type domain. S-adenosyl-L-methionine-binding positions include 264 to 265 (LS), Gly-284, 288 to 292 (DKNRH), Cys-296, Leu-310, and 322 to 324 (QVL). Asp-288 serves as the catalytic Proton acceptor. The segment at 354 to 396 (KGGKLKSADHESEDQTPRESVEAVEAEPDGEGAAAEAGEGGKE) is disordered. The segment covering 359 to 374 (KSADHESEDQTPRESV) has biased composition (basic and acidic residues).

Belongs to the class IV-like SAM-binding methyltransferase superfamily. TRM10 family. In terms of assembly, monomer.

The protein resides in the cytoplasm. It is found in the nucleus. It carries out the reaction guanosine(9) in tRNA + S-adenosyl-L-methionine = N(1)-methylguanosine(9) in tRNA + S-adenosyl-L-homocysteine + H(+). Functionally, S-adenosyl-L-methionine-dependent guanine N(1)-methyltransferase that catalyzes the formation of N(1)-methylguanine at position 9 (m1G9) in cytoplasmic tRNA. The sequence is that of tRNA (guanine(9)-N1)-methyltransferase from Aspergillus fumigatus (strain ATCC MYA-4609 / CBS 101355 / FGSC A1100 / Af293) (Neosartorya fumigata).